Reading from the N-terminus, the 214-residue chain is Large ribosomal subunit protein uL3 (214 aa).

Residues 134–153 (ATHGNSLSHRAPGSIGQNQT) form a disordered region. Glutamine 152 carries the post-translational modification N5-methylglutamine.

This sequence belongs to the universal ribosomal protein uL3 family. As to quaternary structure, part of the 50S ribosomal subunit. Forms a cluster with proteins L14 and L19. Methylated by PrmB.

Its function is as follows. One of the primary rRNA binding proteins, it binds directly near the 3'-end of the 23S rRNA, where it nucleates assembly of the 50S subunit. The sequence is that of Large ribosomal subunit protein uL3 from Buchnera aphidicola subsp. Baizongia pistaciae (strain Bp).